The primary structure comprises 126 residues: Adrenocorticotropic hormone receptor (126 aa).

Residues 1 to 25 (VLPEEIFFTISIVGVLENLIVLLAV) traverse the membrane as a helical segment. The Cytoplasmic segment spans residues 26–34 (FKNKNLQAP). Residues 35–55 (MYFFICSLAISDMLGSLYKIL) traverse the membrane as a helical segment. Over 56-80 (ENILIILRNMGYLKPRGSFETTADD) the chain is Extracellular. The helical transmembrane segment at 81-102 (IIDSLFVLSLLGAIFSLSVIAA) threads the bilayer. Residues 103-123 (DRYITIFHALRYHSIVTMRRT) lie on the Cytoplasmic side of the membrane. Residues 124–126 (VVV) traverse the membrane as a helical segment.

It belongs to the G-protein coupled receptor 1 family. As to quaternary structure, interacts with MRAP; increasing ligand-sensitivity and generation of cAMP. Interacts with MRAP2; competing with MRAP for binding to MC2R and impairing the binding of corticotropin (ACTH).

It localises to the cell membrane. Functionally, receptor for corticotropin (ACTH). This receptor is mediated by G proteins (G(s)) which activate adenylate cyclase (cAMP). The polypeptide is Adrenocorticotropic hormone receptor (MC2R) (Papio hamadryas (Hamadryas baboon)).